Here is a 111-residue protein sequence, read N- to C-terminus: DNA-directed RNA polymerase subunit Rpo11 (111 aa).

This sequence belongs to the archaeal Rpo11/eukaryotic RPB11/RPC19 RNA polymerase subunit family. As to quaternary structure, part of the RNA polymerase complex.

It localises to the cytoplasm. The enzyme catalyses RNA(n) + a ribonucleoside 5'-triphosphate = RNA(n+1) + diphosphate. DNA-dependent RNA polymerase (RNAP) catalyzes the transcription of DNA into RNA using the four ribonucleoside triphosphates as substrates. In Thermoplasma acidophilum (strain ATCC 25905 / DSM 1728 / JCM 9062 / NBRC 15155 / AMRC-C165), this protein is DNA-directed RNA polymerase subunit Rpo11.